The primary structure comprises 282 residues: MRAVWTGAVNFGLVNVPVKMYAATEEHDLKGHLAHVQDGGRIRYHKVCETCGEQVHTADLGKVFEVDGQTALLTDEDLAELPSENNKVIDVVEFVPAGEVDPILLDKPYYLNAEGSVRPYALLARTLSDADKVAIVRVTLRSKEHLAVLRVTGKNEVLTLQTLRWPDEVREPDFPKLDNKPELSEAELKVAAMLVDELSAPFNPDKHQDTYKVELRALVESKLEPVEVPEDVSGLLAKLEASVKPKQAKPDIRTWAKAQGFKISARGRIPKDIVDKYEGAMA.

The region spanning 9–189 is the Ku domain; that stretch reads VNFGLVNVPV…KPELSEAELK (181 aa).

In terms of assembly, homodimer. Interacts with host LigD, maybe via the LigD Pol domain.

In terms of biological role, required for replication of viruses with short cos ends (4 bases). Stimulates dsDNA end-joining by host LigD; in conjunction with M.smegmatis or M.tuberculosis LigD can reconstitute NHEJ in S.cerevisiae. Binds dsDNA with either blunt, 5'- or 3-overhangs, protecting it from host exonuclease degradation. The chain is Protein Ku (206) from Mycobacterium phage Omega (Mycobacteriophage Omega).